A 727-amino-acid polypeptide reads, in one-letter code: Fatty acid oxidation complex subunit alpha (727 aa).

Positions methionine 1–proline 200 are enoyl-CoA hydratase. Positions lysine 316–serine 727 are 3-hydroxyacyl-CoA dehydrogenase.

In the N-terminal section; belongs to the enoyl-CoA hydratase/isomerase family. This sequence in the central section; belongs to the 3-hydroxyacyl-CoA dehydrogenase family. As to quaternary structure, heterotetramer of two alpha chains (FadJ) and two beta chains (FadI).

The protein resides in the cytoplasm. It catalyses the reaction a (3S)-3-hydroxyacyl-CoA = a (2E)-enoyl-CoA + H2O. The enzyme catalyses a 4-saturated-(3S)-3-hydroxyacyl-CoA = a (3E)-enoyl-CoA + H2O. The catalysed reaction is a (3S)-3-hydroxyacyl-CoA + NAD(+) = a 3-oxoacyl-CoA + NADH + H(+). It carries out the reaction (3S)-3-hydroxybutanoyl-CoA = (3R)-3-hydroxybutanoyl-CoA. It functions in the pathway lipid metabolism; fatty acid beta-oxidation. Catalyzes the formation of a hydroxyacyl-CoA by addition of water on enoyl-CoA. Also exhibits 3-hydroxyacyl-CoA epimerase and 3-hydroxyacyl-CoA dehydrogenase activities. The polypeptide is Fatty acid oxidation complex subunit alpha (Pectobacterium carotovorum subsp. carotovorum (strain PC1)).